The sequence spans 633 residues: Electron transfer flavoprotein-ubiquinone oxidoreductase, mitochondrial (633 aa).

The transit peptide at 1-90 (MHRFLVKLSS…NGITSSRCIS (90 aa)) directs the protein to the mitochondrion. Position 102–116 (102–116 (VLIVGAGPAGLSAAI)) interacts with FAD. Residues 140–161 (VGGHIISGNVFEPLALDELLPH) lie within the membrane without spanning it. Residues Gly-334 and Gly-335 each coordinate a ubiquinone. Residues 401–421 (IPYPVFPGGAIIGCSAGFLNV) lie within the membrane without spanning it. Cys-578, Cys-602, Cys-605, and Cys-608 together coordinate [4Fe-4S] cluster. The 4Fe-4S ferredoxin-type domain occupies 593 to 622 (PKLQINAQNCLHCKACDIKDPKQNIEWTVP).

It belongs to the ETF-QO/FixC family. The cofactor is [4Fe-4S] cluster. FAD serves as cofactor.

The protein resides in the mitochondrion inner membrane. It catalyses the reaction a ubiquinone + reduced [electron-transfer flavoprotein] = a ubiquinol + oxidized [electron-transfer flavoprotein] + H(+). Up-regulated by KIN10, by S1-bZIP specific dimers, and also by C/S1 bZIP heterodimers. In terms of biological role, accepts electrons from ETF and reduces ubiquinone. May act downstream of IVD and D2HGDH in the degradation of phytol or chlorophyll during dark-induced senescence and sugar starvation. The sequence is that of Electron transfer flavoprotein-ubiquinone oxidoreductase, mitochondrial (ETFQO) from Arabidopsis thaliana (Mouse-ear cress).